The chain runs to 329 residues: Phosphatidylcholine:ceramide cholinephosphotransferase 3 (329 aa).

Topologically, residues 1-26 are cytoplasmic; that stretch reads MAVPPVEMYSGSFWNRMRKPLPLRTQ. The chain crosses the membrane as a helical span at residues 27–47; the sequence is VIRFTVVFVIVSFILAVALQI. Residues 48–74 are Extracellular-facing; that stretch reads THERMPDPKVTKPLPDLGFELLTKVPG. The helical transmembrane segment at 75 to 95 threads the bilayer; it reads MYVLADCCIGFLNILSVFTAF. Topologically, residues 96 to 147 are cytoplasmic; sequence KLYLLHRHCVGSGEPELPCNIPGVSRFFLSVWLCKENCRIELRNIHTIAWIR. The chain crosses the membrane as a helical span at residues 148 to 168; sequence FITSYALLLLFRSAVIVMTSL. The Extracellular portion of the chain corresponds to 169 to 211; that stretch reads PAPDDLCQNPPKIENPVKNVILTVLTAGAGSIHCGDLMYSGHT. Residues 212-232 form a helical membrane-spanning segment; that stretch reads VILTLHLMFHWIYGAMVHWSF. A topological domain (cytoplasmic) is located at residue Arg-233. Residues 234–254 form a helical membrane-spanning segment; it reads PVVTVVAIFGYYCIVASRFHY. Topologically, residues 255–257 are extracellular; sequence TDD. The helical transmembrane segment at 258-278 threads the bilayer; that stretch reads VLVAIYLTIATFIAVGHNADG. Residues 279–329 are Cytoplasmic-facing; the sequence is APWQLQLFIRWWPCCGANSREVTEDSQPVMVAFKSEAAGQSSRKVVDERNH.

The protein belongs to the sphingomyelin synthase family.

Its subcellular location is the membrane. It catalyses the reaction an N-acylsphing-4-enine + a 1,2-diacyl-sn-glycero-3-phosphocholine = a sphingomyelin + a 1,2-diacyl-sn-glycerol. The catalysed reaction is an N-acylsphinganine + a 1,2-diacyl-sn-glycero-3-phosphocholine = an N-acylsphinganine-1-phosphocholine + a 1,2-diacyl-sn-glycerol. It carries out the reaction an N-acylsphing-4-enine + a 1,2-diacyl-sn-glycero-3-phosphoethanolamine = an N-acylsphing-4-enine 1-phosphoethanolamine + a 1,2-diacyl-sn-glycerol. The enzyme catalyses an N-acylsphinganine + a 1,2-diacyl-sn-glycero-3-phosphoethanolamine = an N-acylsphinganine-1-phosphoethanolamine + a 1,2-diacyl-sn-glycerol. Bifunctional sphingomyelin (SM)/ethanolamine phosphorylceramide (EPC) synthase with minimal inositol phosphorylceramide (IPC) synthase activity. Specificity is likely to be defined by residues in the lumenal catalytic domain that interact with the polar head groups of the phospholipid donors. SM is synthesized by both stages of the parasite life cycle, bloodstream forms (BSF) and procyclic forms (PCF), by transferring the phosphocholine from a 1,2-diacyl-sn-glycero-3-phosphocholine to an N-acylsphing-4-enine (ceramide) or an N-acylsphinganine (dihydroceramide). Similarly, EPC is synthesized by transferring phosphoethanolamine from a 1,2-diacyl-sn-glycero-3-phosphoethanolamine to ceramide or dihydroceramide by BSF and PCF, while IPC is confined to PCF. The ceramide/dihydroceramide ratios are skewed towards dihydroceramide in PCF parasites and ceramide in BSF parasites, this is likely due to differential expression and/or regulation of dihydroceramide desaturase, the enzyme responsible for converting dihydroceramide to ceramide. The polypeptide is Phosphatidylcholine:ceramide cholinephosphotransferase 3 (Trypanosoma brucei brucei).